A 766-amino-acid polypeptide reads, in one-letter code: Lanosterol synthase ERG7 (766 aa).

Residues 1 to 47 (MVANSTGRDASALKSRKRAADSESEPLLKQGQPFPKQPRIGSELDKT) are disordered. The stretch at 148–190 (ATAIYNYISARAHPEDGGWGLHIEGESSVFGTLMNYVALRLVG) is one PFTB 1 repeat. The Proton donor role is filled by Asp482. 2 PFTB repeats span residues 586 to 626 (IRTA…KHIG) and 635 to 676 (SRRG…VVQT).

It belongs to the terpene cyclase/mutase family.

It is found in the lipid droplet. The protein resides in the endoplasmic reticulum membrane. The enzyme catalyses (S)-2,3-epoxysqualene = lanosterol. The protein operates within terpene metabolism; lanosterol biosynthesis; lanosterol from farnesyl diphosphate: step 3/3. Its pathway is steroid metabolism; ergosterol biosynthesis. Lanosterol synthase; part of the third module of ergosterol biosynthesis pathway that includes the late steps of the pathway. ERG7 catalyzes the cyclization of (S)-2,3 oxidosqualene to lanosterol, a reaction that forms the sterol core. The third module or late pathway involves the ergosterol synthesis itself through consecutive reactions that mainly occur in the endoplasmic reticulum (ER) membrane. Firstly, the squalene synthase ERG9 catalyzes the condensation of 2 farnesyl pyrophosphate moieties to form squalene, which is the precursor of all steroids. Squalene synthase is crucial for balancing the incorporation of farnesyl diphosphate (FPP) into sterol and nonsterol isoprene synthesis. Secondly, squalene is converted into lanosterol by the consecutive action of the squalene epoxidase ERG1 and the lanosterol synthase ERG7. Then, the delta(24)-sterol C-methyltransferase ERG6 methylates lanosterol at C-24 to produce eburicol. Eburicol is the substrate of the sterol 14-alpha demethylase encoded by CYP51A, CYP51B and CYP51C, to yield 4,4,24-trimethyl ergosta-8,14,24(28)-trienol. CYP51B encodes the enzyme primarily responsible for sterol 14-alpha-demethylation, and plays an essential role in ascospore formation. CYP51A encodes an additional sterol 14-alpha-demethylase, induced on ergosterol depletion and responsible for the intrinsic variation in azole sensitivity. The third CYP51 isoform, CYP51C, does not encode a sterol 14-alpha-demethylase, but is required for full virulence on host wheat ears. The C-14 reductase ERG24 then reduces the C14=C15 double bond which leads to 4,4-dimethylfecosterol. A sequence of further demethylations at C-4, involving the C-4 demethylation complex containing the C-4 methylsterol oxidases ERG25, the sterol-4-alpha-carboxylate 3-dehydrogenase ERG26 and the 3-keto-steroid reductase ERG27, leads to the production of fecosterol via 4-methylfecosterol. ERG28 has a role as a scaffold to help anchor ERG25, ERG26 and ERG27 to the endoplasmic reticulum. The C-8 sterol isomerase ERG2 then catalyzes the reaction which results in unsaturation at C-7 in the B ring of sterols and thus converts fecosterol to episterol. The sterol-C5-desaturases ERG3A and ERG3BB then catalyze the introduction of a C-5 double bond in the B ring to produce 5-dehydroepisterol. The C-22 sterol desaturases ERG5A and ERG5B further convert 5-dehydroepisterol into ergosta-5,7,22,24(28)-tetraen-3beta-ol by forming the C-22(23) double bond in the sterol side chain. Finally, ergosta-5,7,22,24(28)-tetraen-3beta-ol is substrate of the C-24(28) sterol reductase ERG4 to produce ergosterol. The sequence is that of Lanosterol synthase ERG7 from Gibberella zeae (strain ATCC MYA-4620 / CBS 123657 / FGSC 9075 / NRRL 31084 / PH-1) (Wheat head blight fungus).